The primary structure comprises 106 residues: UPF0145 protein Tlet_1264 (106 aa).

This sequence belongs to the UPF0145 family.

The sequence is that of UPF0145 protein Tlet_1264 from Pseudothermotoga lettingae (strain ATCC BAA-301 / DSM 14385 / NBRC 107922 / TMO) (Thermotoga lettingae).